Here is a 143-residue protein sequence, read N- to C-terminus: Large ribosomal subunit protein uL11 (143 aa).

Belongs to the universal ribosomal protein uL11 family. Part of the ribosomal stalk of the 50S ribosomal subunit. Interacts with L10 and the large rRNA to form the base of the stalk. L10 forms an elongated spine to which L12 dimers bind in a sequential fashion forming a multimeric L10(L12)X complex. In terms of processing, one or more lysine residues are methylated.

Its function is as follows. Forms part of the ribosomal stalk which helps the ribosome interact with GTP-bound translation factors. The protein is Large ribosomal subunit protein uL11 of Bifidobacterium adolescentis (strain ATCC 15703 / DSM 20083 / NCTC 11814 / E194a).